A 1129-amino-acid chain; its full sequence is Phospholipid-transporting ATPase 11C (1129 aa).

Over 1-83 (MFRRTLNRLC…IIFLVQVTVD (83 aa)) the chain is Cytoplasmic. Residues 84–104 (TPTSPVTSGLPLFFVITVTAI) form a helical membrane-spanning segment. Over 105–287 (KQGYEDWLRH…SQKCSAVEKS (183 aa)) the chain is Extracellular. Residues 288 to 308 (INAFLIVYLFILLTKAAVCTT) traverse the membrane as a helical segment. Over 309 to 343 (LKYVWQSSPYNDEPWYNQKTQKERETFQVLKMFTD) the chain is Cytoplasmic. The helical transmembrane segment at 344 to 364 (FLSFMVLFNFIIPVSMYVTVE) threads the bilayer. Residues 365-876 (MQKFLGSFFI…YVRIAHLVQY (512 aa)) are Extracellular-facing. Residue D409 is the 4-aspartylphosphate intermediate of the active site. Residues D409, K410, and T411 each contribute to the ATP site. D409 contacts Mg(2+). T411 is a binding site for Mg(2+). Position 442 is a phosphoserine (S442). Residues E498, F540, K563, and R594 each coordinate ATP. Positions 607–643 (DFERINAQLVEAKMALQDREEKLEKVFDEIETNMNLI) form a coiled coil. ATP is bound by residues T674, G675, and D676. Positions 695–726 (TELLELTTKTIEESERKEDRLHELLIEYRKKL) form a coiled coil. Residues R789 and K795 each coordinate ATP. D816 is a Mg(2+) binding site. The ATP site is built by N819 and D820. Residue D820 participates in Mg(2+) binding. Residues 877–897 (FFYKNLCFILPQFLYQFFCGF) traverse the membrane as a helical segment. Residues 898–905 (SQQPLYDA) lie on the Cytoplasmic side of the membrane. A helical transmembrane segment spans residues 906 to 926 (AYLTMYNICFTSLPILAYSLL). Residues 927 to 952 (EQHINIDTLTADPRLYMKITGNAMLQ) lie on the Extracellular side of the membrane. The helical transmembrane segment at 953–973 (LGPFLHWTFLAAFEGTVFFFG) threads the bilayer. Topologically, residues 974-988 (TYFLFQTSSLEDNGK) are cytoplasmic. The chain crosses the membrane as a helical span at residues 989-1009 (IYGNWTFGTIVFTVLVFTVTL). The Extracellular segment spans residues 1010 to 1023 (KLALDTRFWTWINH). Residues 1024-1044 (FVIWGSLAFYVFFSFFWGGII) traverse the membrane as a helical segment. Topologically, residues 1045–1066 (WPFLKQQRMYFVFAQMLCSVST) are cytoplasmic. A helical membrane pass occupies residues 1067-1087 (WLAIILLIFISLFPEILLIVV). Residues 1088-1129 (KNVRRRSARRNLSCRRASDSLSARPSVRPLLLRTFSDESNIL) are Extracellular-facing. 3 positions are modified to phosphoserine: S1105, S1113, and S1123. A Di-leucine motif motif is present at residues 1113-1118 (SVRPLL).

It belongs to the cation transport ATPase (P-type) (TC 3.A.3) family. Type IV subfamily. In terms of assembly, component of a P4-ATPase flippase complex which consists of a catalytic alpha subunit ATP11C and an accessory beta subunit TMEM30A. Requires Mg(2+) as cofactor. Proteolytically cleaved by CASP3, CASP6 and CASP7. In terms of processing, phosphorylated at Ser-1113 likely by PRKCA; this creates a functional di-leucine motif that is sufficient for endocytosis. As to expression, widely expressed. Expressed in retina, brain, liver and testes (at protein level). Expressed in lung, bone marrow, lymph nodes, prostate, ovary and uterus. Expressed in fetus.

Its subcellular location is the cell membrane. It localises to the endoplasmic reticulum membrane. The protein resides in the early endosome membrane. It is found in the recycling endosome membrane. It carries out the reaction ATP + H2O + phospholipidSide 1 = ADP + phosphate + phospholipidSide 2.. The catalysed reaction is a 1,2-diacyl-sn-glycero-3-phospho-L-serine(out) + ATP + H2O = a 1,2-diacyl-sn-glycero-3-phospho-L-serine(in) + ADP + phosphate + H(+). The enzyme catalyses a 1,2-diacyl-sn-glycero-3-phosphoethanolamine(out) + ATP + H2O = a 1,2-diacyl-sn-glycero-3-phosphoethanolamine(in) + ADP + phosphate + H(+). In terms of biological role, catalytic component of a P4-ATPase flippase complex which catalyzes the hydrolysis of ATP coupled to the transport of aminophospholipids, phosphatidylserines (PS) and phosphatidylethanolamines (PE), from the outer to the inner leaflet of the plasma membrane. Major PS-flippase in immune cell subsets. In erythrocyte plasma membrane, it is required to maintain PS in the inner leaflet preventing its exposure on the surface. This asymmetric distribution is critical for the survival of erythrocytes in circulation since externalized PS is a phagocytic signal for erythrocyte clearance by splenic macrophages. Required for B cell differentiation past the pro-B cell stage. Seems to mediate PS flipping in pro-B cells. May be involved in the transport of cholestatic bile acids. The sequence is that of Phospholipid-transporting ATPase 11C from Mus musculus (Mouse).